A 305-amino-acid polypeptide reads, in one-letter code: Putative ABC transporter molybdenum-binding protein HVO_B0369 (305 aa).

Residues 1–40 (MNPDSAAGRSSRRAFLAAVGGVAAGGLTATAGCLGRGEEA) constitute a signal peptide (tat-type signal).

It belongs to the bacterial solute-binding protein 1 family. WtpA subfamily. The complex is composed of two ATP-binding proteins, two transmembrane proteins (HVO_B0370) and a solute-binding protein (HVO_B0369). In terms of processing, predicted to be exported by the Tat system. The position of the signal peptide cleavage has not been experimentally proven.

In terms of biological role, part of an ABC transporter complex involved in molybdenum import. The chain is Putative ABC transporter molybdenum-binding protein HVO_B0369 from Haloferax volcanii (strain ATCC 29605 / DSM 3757 / JCM 8879 / NBRC 14742 / NCIMB 2012 / VKM B-1768 / DS2) (Halobacterium volcanii).